We begin with the raw amino-acid sequence, 143 residues long: Large ribosomal subunit protein uL11 (143 aa).

Belongs to the universal ribosomal protein uL11 family. In terms of assembly, part of the ribosomal stalk of the 50S ribosomal subunit. Interacts with L10 and the large rRNA to form the base of the stalk. L10 forms an elongated spine to which L12 dimers bind in a sequential fashion forming a multimeric L10(L12)X complex. In terms of processing, one or more lysine residues are methylated.

Forms part of the ribosomal stalk which helps the ribosome interact with GTP-bound translation factors. The polypeptide is Large ribosomal subunit protein uL11 (Treponema denticola (strain ATCC 35405 / DSM 14222 / CIP 103919 / JCM 8153 / KCTC 15104)).